The sequence spans 146 residues: Hemoglobin subunit beta (146 aa).

The Globin domain occupies 2–146 (HWSAEEKQLI…VAHALARKYH (145 aa)). Heme b contacts are provided by H63 and H92.

This sequence belongs to the globin family. In terms of assembly, heterotetramer of two alpha chains and two beta chains. In terms of tissue distribution, red blood cells.

Its function is as follows. Involved in oxygen transport from the lung to the various peripheral tissues. The polypeptide is Hemoglobin subunit beta (HBB) (Anseranas semipalmata (Magpie goose)).